A 184-amino-acid polypeptide reads, in one-letter code: Ribosome-recycling factor (184 aa).

The protein belongs to the RRF family.

Its subcellular location is the cytoplasm. Responsible for the release of ribosomes from messenger RNA at the termination of protein biosynthesis. May increase the efficiency of translation by recycling ribosomes from one round of translation to another. This Leptospira interrogans serogroup Icterohaemorrhagiae serovar copenhageni (strain Fiocruz L1-130) protein is Ribosome-recycling factor.